Consider the following 150-residue polypeptide: 3-dehydroquinate dehydratase (150 aa).

The active-site Proton acceptor is the Tyr26. Asn77, His83, and Asp90 together coordinate substrate. Residue His103 is the Proton donor of the active site. Substrate contacts are provided by residues 104-105 (LS) and Arg114.

The protein belongs to the type-II 3-dehydroquinase family. Homododecamer.

The enzyme catalyses 3-dehydroquinate = 3-dehydroshikimate + H2O. It participates in metabolic intermediate biosynthesis; chorismate biosynthesis; chorismate from D-erythrose 4-phosphate and phosphoenolpyruvate: step 3/7. Its function is as follows. Catalyzes a trans-dehydration via an enolate intermediate. The chain is 3-dehydroquinate dehydratase from Pectobacterium carotovorum subsp. carotovorum (strain PC1).